The following is a 259-amino-acid chain: Deoxyribose-phosphate aldolase (259 aa).

The active-site Proton donor/acceptor is Asp102. The Schiff-base intermediate with acetaldehyde role is filled by Lys167. Lys201 acts as the Proton donor/acceptor in catalysis.

It belongs to the DeoC/FbaB aldolase family. DeoC type 2 subfamily.

The protein localises to the cytoplasm. The catalysed reaction is 2-deoxy-D-ribose 5-phosphate = D-glyceraldehyde 3-phosphate + acetaldehyde. Its pathway is carbohydrate degradation; 2-deoxy-D-ribose 1-phosphate degradation; D-glyceraldehyde 3-phosphate and acetaldehyde from 2-deoxy-alpha-D-ribose 1-phosphate: step 2/2. Its function is as follows. Catalyzes a reversible aldol reaction between acetaldehyde and D-glyceraldehyde 3-phosphate to generate 2-deoxy-D-ribose 5-phosphate. This is Deoxyribose-phosphate aldolase from Escherichia coli O1:K1 / APEC.